A 280-amino-acid polypeptide reads, in one-letter code: Foldase protein PrsA 4 (280 aa).

Positions 1 to 21 (MKRKKLVIGSILMGMTLSLSA) are cleaved as a signal peptide. Cys-22 carries N-palmitoyl cysteine lipidation. A lipid anchor (S-diacylglycerol cysteine) is attached at Cys-22. In terms of domain architecture, PpiC spans 132–222 (KPKLQVSHIL…FGYHIIKLTD (91 aa)).

Belongs to the PrsA family.

It localises to the cell membrane. It catalyses the reaction [protein]-peptidylproline (omega=180) = [protein]-peptidylproline (omega=0). Its function is as follows. Plays a major role in protein secretion by helping the post-translocational extracellular folding of several secreted proteins. This Bacillus cereus (strain ATCC 14579 / DSM 31 / CCUG 7414 / JCM 2152 / NBRC 15305 / NCIMB 9373 / NCTC 2599 / NRRL B-3711) protein is Foldase protein PrsA 4 (prsA4).